Reading from the N-terminus, the 824-residue chain is MPYPHPYPWQSSRRRRRRRGRDGAPRQPQARRVVERAAAGPGHATTTQQPDNVSSAKVFQTSRVETESEIAKWPGKPQDLEDEHQAEEAELQPLIDQVRAMLRSMNDGDTSASAYDTAWVAMVPKVGGDGGAQPQFPATVRWIVDHQLPDGSWGDSALFSAYDRMINTLACVVALTKWSLEPARCEAGLSFLHENMWRLAEEEAESMPIGFEIAFPSLIQTARDLGVVDFPYGHPALQSIYANREVKLKRIPRDMMHRVPTSILHSLEGMPDLDWPRLLNLQSCDGSFLFSPSATAYALMQTGDKKCFEYIDRIVKKFNGGVPNVYPVDLFEHIWVVDRLERLGISRYFQREIEQCMDYVNRHWTEDGICWARKSNVKDVDDTAMAFRLLRLHGYNVSPSVFKNFEKDGEFFCFVGQSTQAVTGMYNLNRASQISFQGEDVLHRARVFSYEFLRQREEQGMIRDKWIVAKDLPGEVQYTLDFPWYASLPRVEARTYLDQYGGKDDVWIGKTLYRMPLVNNDTYLELAIRDFNHCQALHQLECNGLQTWYKDNCLDAFGVEPQDVLRSYFLAAACIFEPSRAAERLAWARTSMIANAISTHLRDISEDKKRLECFVHCLYEENDVSWLKRNPNDVILERALRRLINLLAQEALPIHEGQRFIHSLLSLAWTEWMLQKANKEENKYHKCSGIEPQYMVHDRQTYLLLVQVIEICAGRIGEAVSMINNKDNDWFIQLTCATCDSLNHRMLLSQDTMKNEARINWIEKEIELNMQELAQSLLLRCDEKTSNKKTKKTLWDVLRSLYYATHSPQHMIDRHVSRVIFEPV.

Residues 1–63 (MPYPHPYPWQ…SSAKVFQTSR (63 aa)) constitute a chloroplast transit peptide. The segment at 1–87 (MPYPHPYPWQ…QDLEDEHQAE (87 aa)) is disordered. Residues 44-63 (ATTTQQPDNVSSAKVFQTSR) are compositionally biased toward polar residues. Position 247 (Lys247) interacts with substrate. Residues Asp379 and Asp381 each coordinate Mg(2+). Residues 379–382 (DVDD) carry the DXDD motif motif. Lys465 provides a ligand contact to substrate.

Belongs to the terpene synthase family. Tpsc subfamily. Mg(2+) is required as a cofactor.

It localises to the plastid. The protein localises to the chloroplast. It carries out the reaction (2E,6E,10E)-geranylgeranyl diphosphate = ent-copalyl diphosphate. It functions in the pathway plant hormone biosynthesis; gibberellin biosynthesis. Its function is as follows. Involved in giberellin biosynthesis. Catalyzes the conversion of geranylgeranyl diphosphate to the gibberellin precursor ent-copalyl diphosphate. The polypeptide is Ent-copalyl diphosphate synthase AN1, chloroplastic (Zea mays (Maize)).